A 119-amino-acid polypeptide reads, in one-letter code: RIIa domain-containing protein 1 (119 aa).

One can recognise an RIIa domain in the interval 70-104 (KEVSLLISGFFREMFLKRPDNILEFAAHYFTDPRL).

In terms of tissue distribution, abundant in tissues rich in highly ciliated cells, such as testis, trachea and olfactory epithelium.

The protein is RIIa domain-containing protein 1 (Riiad1) of Mus musculus (Mouse).